The following is a 497-amino-acid chain: Protein nucleotidyltransferase YdiU (497 aa).

Glycine 88, glycine 90, arginine 91, lysine 110, aspartate 122, glycine 123, arginine 173, and arginine 180 together coordinate ATP. The Proton acceptor role is filled by aspartate 249. Residues asparagine 250 and aspartate 259 each contribute to the Mg(2+) site. Aspartate 259 provides a ligand contact to ATP. A disordered region spans residues 477–497 (FARYAEPPEGGGRGYRTFCGT).

The protein belongs to the SELO family. Requires Mg(2+) as cofactor. It depends on Mn(2+) as a cofactor.

It carries out the reaction L-seryl-[protein] + ATP = 3-O-(5'-adenylyl)-L-seryl-[protein] + diphosphate. The enzyme catalyses L-threonyl-[protein] + ATP = 3-O-(5'-adenylyl)-L-threonyl-[protein] + diphosphate. The catalysed reaction is L-tyrosyl-[protein] + ATP = O-(5'-adenylyl)-L-tyrosyl-[protein] + diphosphate. It catalyses the reaction L-histidyl-[protein] + UTP = N(tele)-(5'-uridylyl)-L-histidyl-[protein] + diphosphate. It carries out the reaction L-seryl-[protein] + UTP = O-(5'-uridylyl)-L-seryl-[protein] + diphosphate. The enzyme catalyses L-tyrosyl-[protein] + UTP = O-(5'-uridylyl)-L-tyrosyl-[protein] + diphosphate. Its function is as follows. Nucleotidyltransferase involved in the post-translational modification of proteins. It can catalyze the addition of adenosine monophosphate (AMP) or uridine monophosphate (UMP) to a protein, resulting in modifications known as AMPylation and UMPylation. This Methylorubrum extorquens (strain PA1) (Methylobacterium extorquens) protein is Protein nucleotidyltransferase YdiU.